The primary structure comprises 632 residues: 2-oxoacid:ferredoxin oxidoreductase subunit alpha (632 aa).

The YPITP motif motif lies at 254–258; that stretch reads YPITP. The substrate site is built by threonine 257 and arginine 345.

In terms of assembly, heterodimer composed of an alpha and a beta subunit.

It carries out the reaction a 2-oxocarboxylate + 2 oxidized [2Fe-2S]-[ferredoxin] + CoA = an acyl-CoA + 2 reduced [2Fe-2S]-[ferredoxin] + CO2 + H(+). Its function is as follows. Catalyzes the coenzyme A-dependent oxidative decarboxylation of different 2-oxoacids such as 2-oxoglutarate, pyruvate and 2-oxobutyrate to form their CoA derivatives. In Saccharolobus solfataricus (Sulfolobus solfataricus), this protein is 2-oxoacid:ferredoxin oxidoreductase subunit alpha.